A 426-amino-acid polypeptide reads, in one-letter code: N-formyl-4-amino-5-aminomethyl-2-methylpyrimidine deformylase (426 aa).

A coiled-coil region spans residues 1-31 (MDQQIYSLQKKVEEHKEELIQLAKTLISYQT). Zn(2+) is bound at residue histidine 89. Aspartate 91 is an active-site residue. Aspartate 122 is a Zn(2+) binding site. The Proton acceptor role is filled by glutamate 156. Residues glutamate 157, aspartate 180, and histidine 394 each coordinate Zn(2+).

The protein belongs to the peptidase M20A family. Requires Zn(2+) as cofactor. The cofactor is Co(2+).

The catalysed reaction is N-formyl-4-amino-5-aminomethyl-2-methylpyrimidine + H2O = 4-amino-5-aminomethyl-2-methylpyrimidine + formate. Its pathway is cofactor biosynthesis; thiamine diphosphate biosynthesis. Functionally, catalyzes the deformylation of the formylaminopyrimidine N-formyl-4-amino-5-aminomethyl-2-methylpyrimidine (FAMP) to give the corresponding aminopyrimidine. In Bacillus subtilis (strain 168), this protein is N-formyl-4-amino-5-aminomethyl-2-methylpyrimidine deformylase.